Reading from the N-terminus, the 198-residue chain is Holliday junction branch migration complex subunit RuvA (198 aa).

Residues 1-63 (MYDYIKGQLT…EDAQLLFGFH (63 aa)) are domain I. Residues 64–142 (SEEEKDVFLK…EAPKEESSKP (79 aa)) are domain II. The segment at 143–147 (PKAKQ) is flexible linker. Residues 148 to 198 (QGNEQLDEAVEALLALGYKATELKKIRAFFEGTSETAEQYIKSALKMLMKG) form a domain III region.

The protein belongs to the RuvA family. Homotetramer. Forms an RuvA(8)-RuvB(12)-Holliday junction (HJ) complex. HJ DNA is sandwiched between 2 RuvA tetramers; dsDNA enters through RuvA and exits via RuvB. An RuvB hexamer assembles on each DNA strand where it exits the tetramer. Each RuvB hexamer is contacted by two RuvA subunits (via domain III) on 2 adjacent RuvB subunits; this complex drives branch migration. In the full resolvosome a probable DNA-RuvA(4)-RuvB(12)-RuvC(2) complex forms which resolves the HJ.

The protein localises to the cytoplasm. The RuvA-RuvB-RuvC complex processes Holliday junction (HJ) DNA during genetic recombination and DNA repair, while the RuvA-RuvB complex plays an important role in the rescue of blocked DNA replication forks via replication fork reversal (RFR). RuvA specifically binds to HJ cruciform DNA, conferring on it an open structure. The RuvB hexamer acts as an ATP-dependent pump, pulling dsDNA into and through the RuvAB complex. HJ branch migration allows RuvC to scan DNA until it finds its consensus sequence, where it cleaves and resolves the cruciform DNA. This Streptococcus equi subsp. equi (strain 4047) protein is Holliday junction branch migration complex subunit RuvA.